We begin with the raw amino-acid sequence, 325 residues long: Malate dehydrogenase (325 aa).

9 to 15 contacts NAD(+); it reads GAAGAIG. Arg90 and Arg96 together coordinate substrate. Residues Asn103, Gln110, and 127–129 contribute to the NAD(+) site; that span reads VGN. Asn129 and Arg160 together coordinate substrate. His185 (proton acceptor) is an active-site residue.

This sequence belongs to the LDH/MDH superfamily. MDH type 2 family.

It carries out the reaction (S)-malate + NAD(+) = oxaloacetate + NADH + H(+). In terms of biological role, catalyzes the reversible oxidation of malate to oxaloacetate. This chain is Malate dehydrogenase, found in Rubrobacter xylanophilus (strain DSM 9941 / JCM 11954 / NBRC 16129 / PRD-1).